Reading from the N-terminus, the 140-residue chain is ATP synthase epsilon chain (140 aa).

It belongs to the ATPase epsilon chain family. In terms of assembly, F-type ATPases have 2 components, CF(1) - the catalytic core - and CF(0) - the membrane proton channel. CF(1) has five subunits: alpha(3), beta(3), gamma(1), delta(1), epsilon(1). CF(0) has three main subunits: a, b and c.

The protein resides in the cell inner membrane. In terms of biological role, produces ATP from ADP in the presence of a proton gradient across the membrane. The protein is ATP synthase epsilon chain of Neisseria meningitidis serogroup B (strain ATCC BAA-335 / MC58).